The chain runs to 540 residues: Glucose-6-phosphate isomerase (540 aa).

Residue glutamate 350 is the Proton donor of the active site. Active-site residues include histidine 381 and lysine 503.

The protein belongs to the GPI family.

It is found in the cytoplasm. It carries out the reaction alpha-D-glucose 6-phosphate = beta-D-fructose 6-phosphate. It functions in the pathway carbohydrate biosynthesis; gluconeogenesis. The protein operates within carbohydrate degradation; glycolysis; D-glyceraldehyde 3-phosphate and glycerone phosphate from D-glucose: step 2/4. Functionally, catalyzes the reversible isomerization of glucose-6-phosphate to fructose-6-phosphate. The sequence is that of Glucose-6-phosphate isomerase from Burkholderia orbicola (strain AU 1054).